The sequence spans 302 residues: ATP synthase mitochondrial F1 complex assembly factor 1 (302 aa).

The protein belongs to the ATP11 family. As to quaternary structure, interacts with ATP5F1B; involved in the assembly of the F1 component of the mitochondrial ATP synthase (ATPase).

Its subcellular location is the mitochondrion inner membrane. Functionally, has a complex stabilizing activity in the assembly of the mitochondrial F1-F0 complex. In Danio rerio (Zebrafish), this protein is ATP synthase mitochondrial F1 complex assembly factor 1 (atpaf1).